Reading from the N-terminus, the 307-residue chain is Elongation factor Ts (307 aa).

The tract at residues 79-82 (TDFV) is involved in Mg(2+) ion dislocation from EF-Tu.

The protein belongs to the EF-Ts family.

Its subcellular location is the cytoplasm. In terms of biological role, associates with the EF-Tu.GDP complex and induces the exchange of GDP to GTP. It remains bound to the aminoacyl-tRNA.EF-Tu.GTP complex up to the GTP hydrolysis stage on the ribosome. The sequence is that of Elongation factor Ts from Bartonella bacilliformis (strain ATCC 35685 / KC583 / Herrer 020/F12,63).